Here is a 1286-residue protein sequence, read N- to C-terminus: CLIP-associating protein 2 (1286 aa).

The tract at residues 1-40 (MRRLICKRICDYKSFDDEESVDGNRPSSAASAFKVPAPKT) is golgi localization. Ser14 and Ser20 each carry phosphoserine. The tract at residues 17-67 (DEESVDGNRPSSAASAFKVPAPKTPGNPVSSARKPGSAGGPKVGGPSKEGG) is disordered. The span at 53-67 (SAGGPKVGGPSKEGG) shows a compositional bias: gly residues. A TOG 1 region spans residues 66-317 (GGAGAVDEDD…KSLQTYLKSS (252 aa)). 3 HEAT repeats span residues 179–214 (HGAE…IRHT), 215–251 (HVPR…EWQT), and 256–293 (RHAA…HFPG). The tract at residues 320 to 374 (VASLPQSDRSSSSSQESLNRPFSSKWSTANPSTVAGRVSVGGSKANPLPGSLQRS) is disordered. A phosphoserine mark is found at Ser322, Ser333, and Ser336. The segment covering 322–340 (SLPQSDRSSSSSQESLNRP) has biased composition (low complexity). A compositionally biased stretch (polar residues) spans 341 to 352 (FSSKWSTANPST). Phosphoserine occurs at positions 374, 376, and 413. Positions 411 to 473 (YASLEDTSDK…GSRSGSPGRV (63 aa)) are disordered. Residues 417-431 (TSDKMDGTASDDGRV) are compositionally biased toward basic and acidic residues. Residues 450–565 (RGRSRTKMVS…GPGYGISQSS (116 aa)) are interaction with microtubules, MAPRE1 and MAPRE3. Low complexity predominate over residues 459–473 (SQSQPGSRSGSPGRV). 5 positions are modified to phosphoserine: Ser461, Ser465, Ser469, Ser484, and Ser495. A disordered region spans residues 493–564 (SASAQKRSKI…LGPGYGISQS (72 aa)). The SXIP motif 1; mediates interaction with MAPRE1 and targeting to microtubule plus ends motif lies at 500-503 (SKIP). Position 513 is a phosphoserine (Ser513). An SXIP motif 2; mediates interaction with MAPRE1 and targeting to microtubule plus ends motif is present at residues 523 to 526 (SRIP). Phosphoserine occurs at positions 531, 535, 570, 572, 581, 614, and 620. Positions 605-616 (RRYESYGMHSDD) are enriched in basic and acidic residues. The segment at 605-638 (RRYESYGMHSDDDANSDASSACSERSYSSRNGSI) is disordered. Positions 620 to 634 (SDASSACSERSYSSR) are enriched in low complexity. The tract at residues 642 to 873 (MRQTEDVAEV…TKLLHNHLRN (232 aa)) is TOG 2. 2 HEAT repeats span residues 702-739 (KVFS…KMGA) and 764-801 (LQFN…QMDP). Position 779 is a phosphothreonine (Thr779). An interaction with RSN and localization to the Golgi and kinetochores region spans residues 864 to 1286 (TKLLHNHLRN…DPTADVSGQS (423 aa)). Disordered stretches follow at residues 870 to 920 (HLRN…FDYD) and 944 to 989 (SFRS…SQPA). Polar residues-rich tracts occupy residues 872 to 884 (RNTG…SMGS) and 893 to 914 (SPAN…TLSP). The residue at position 884 (Ser884) is a Phosphoserine. Ser944, Ser947, Ser1005, and Ser1021 each carry phosphoserine. A compositionally biased stretch (basic and acidic residues) spans 947–964 (SQEDMSEPVRRDPKKEDG). The interval 1009 to 1286 (RDYNPYNYSD…DPTADVSGQS (278 aa)) is required for cortical localization. 3 HEAT repeats span residues 1046 to 1083 (LDHS…TQEE), 1090 to 1127 (EHFK…HQPA), and 1208 to 1245 (MLLP…VIGD).

It belongs to the CLASP family. As to quaternary structure, interacts with microtubules. Interacts with MAPRE1; probably required for targeting to growing microtubule plus ends. Interacts with ERC1, MAPRE3 and PHLDB2. The interaction with ERC1 may be mediated by PHLDB2. Interacts with GCC2; recruits CLASP2 to Golgi membranes. Interacts with CLIP2 and RSN. Interacts with MACF1. Interacts with mtcl2. Interacts with MTCL1. In terms of processing, phosphorylated by GSK3B. Phosphorylation by GSK3B may negatively regulate binding to microtubule lattices in lamella. Isoform 2 is phosphorylated on Ser-241. Highly expressed in brain and at low levels in heart, kidney and lung.

It is found in the cytoplasm. The protein localises to the cytoskeleton. Its subcellular location is the microtubule organizing center. It localises to the centrosome. The protein resides in the chromosome. It is found in the centromere. The protein localises to the kinetochore. Its subcellular location is the spindle. It localises to the spindle pole. The protein resides in the golgi apparatus. It is found in the trans-Golgi network. The protein localises to the cell membrane. Its subcellular location is the cell projection. It localises to the ruffle membrane. The protein resides in the cell cortex. Functionally, microtubule plus-end tracking protein that promotes the stabilization of dynamic microtubules. Involved in the nucleation of noncentrosomal microtubules originating from the trans-Golgi network (TGN). Required for the polarization of the cytoplasmic microtubule arrays in migrating cells towards the leading edge of the cell. May act at the cell cortex to enhance the frequency of rescue of depolymerizing microtubules by attaching their plus-ends to cortical platforms composed of ERC1 and PHLDB2. This cortical microtubule stabilizing activity is regulated at least in part by phosphatidylinositol 3-kinase signaling. Also performs a similar stabilizing function at the kinetochore which is essential for the bipolar alignment of chromosomes on the mitotic spindle. Acts as a mediator of ERBB2-dependent stabilization of microtubules at the cell cortex. The protein is CLIP-associating protein 2 (Clasp2) of Mus musculus (Mouse).